Consider the following 330-residue polypeptide: tRNA (guanine-N(7)-)-methyltransferase (330 aa).

The segment at 1–27 (MSTPPAKRQKRDQYRKRAAAAANEDTG) is disordered. The span at 7–18 (KRQKRDQYRKRA) shows a compositional bias: basic residues. S-adenosyl-L-methionine-binding positions include Gly-95 and 118 to 119 (EI). Residues 138–185 (QNQLKNSSTTASESPAPAIPAEPATDGASPDAASTPETSNSPVPGGYQ) are disordered. The span at 144–162 (SSTTASESPAPAIPAEPAT) shows a compositional bias: low complexity. The segment covering 172–185 (TPETSNSPVPGGYQ) has biased composition (polar residues). S-adenosyl-L-methionine contacts are provided by residues 193–194 (NT) and Cys-213. Asp-216 is a catalytic residue. Residue 302–304 (TEE) coordinates S-adenosyl-L-methionine.

The protein belongs to the class I-like SAM-binding methyltransferase superfamily. TrmB family. As to quaternary structure, forms a complex with trm82.

Its subcellular location is the nucleus. It carries out the reaction guanosine(46) in tRNA + S-adenosyl-L-methionine = N(7)-methylguanosine(46) in tRNA + S-adenosyl-L-homocysteine. It participates in tRNA modification; N(7)-methylguanine-tRNA biosynthesis. Catalyzes the formation of N(7)-methylguanine at position 46 (m7G46) in tRNA. This is tRNA (guanine-N(7)-)-methyltransferase (trm8) from Aspergillus oryzae (strain ATCC 42149 / RIB 40) (Yellow koji mold).